A 204-amino-acid polypeptide reads, in one-letter code: Holliday junction branch migration complex subunit RuvA (204 aa).

A domain I region spans residues 1-64 (MIGRLRGTLI…EDAQLLYGFN (64 aa)). The interval 65–143 (TVSERALFRE…GWGAGDLFTP (79 aa)) is domain II. A flexible linker region spans residues 144-155 (ATDAAPVDSTPV). The tract at residues 156–204 (IAQNAQEEAMSALLALGYKPPQASKAVSQVAKAGMSSEELIREALKSMV) is domain III.

The protein belongs to the RuvA family. As to quaternary structure, homotetramer. Forms an RuvA(8)-RuvB(12)-Holliday junction (HJ) complex. HJ DNA is sandwiched between 2 RuvA tetramers; dsDNA enters through RuvA and exits via RuvB. An RuvB hexamer assembles on each DNA strand where it exits the tetramer. Each RuvB hexamer is contacted by two RuvA subunits (via domain III) on 2 adjacent RuvB subunits; this complex drives branch migration. In the full resolvosome a probable DNA-RuvA(4)-RuvB(12)-RuvC(2) complex forms which resolves the HJ.

The protein resides in the cytoplasm. The RuvA-RuvB-RuvC complex processes Holliday junction (HJ) DNA during genetic recombination and DNA repair, while the RuvA-RuvB complex plays an important role in the rescue of blocked DNA replication forks via replication fork reversal (RFR). RuvA specifically binds to HJ cruciform DNA, conferring on it an open structure. The RuvB hexamer acts as an ATP-dependent pump, pulling dsDNA into and through the RuvAB complex. HJ branch migration allows RuvC to scan DNA until it finds its consensus sequence, where it cleaves and resolves the cruciform DNA. The sequence is that of Holliday junction branch migration complex subunit RuvA from Vibrio cholerae serotype O1 (strain ATCC 39541 / Classical Ogawa 395 / O395).